The chain runs to 246 residues: Probable fimbrial chaperone YadV (246 aa).

A signal peptide spans 1-25; it reads MFFNTKHTTALCFVTCMAFSSSSIA.

This sequence belongs to the periplasmic pilus chaperone family.

It localises to the periplasm. Functionally, part of the yadCKLM-htrE-yadVN fimbrial operon. Could contribute to adhesion to various surfaces in specific environmental niches. In Escherichia coli (strain K12), this protein is Probable fimbrial chaperone YadV (yadV).